Consider the following 453-residue polypeptide: Putative ABC transporter ATP-binding protein MM_0462 (453 aa).

An ABC transporter domain is found at 4–239 (LETRSLKYSY…QELLKKVGLR (236 aa)). 37-44 (GQNGSGKS) contacts ATP.

It belongs to the ABC transporter superfamily.

It is found in the cell membrane. Functionally, probably part of an ABC transporter complex. Responsible for energy coupling to the transport system. The chain is Putative ABC transporter ATP-binding protein MM_0462 from Methanosarcina mazei (strain ATCC BAA-159 / DSM 3647 / Goe1 / Go1 / JCM 11833 / OCM 88) (Methanosarcina frisia).